The primary structure comprises 95 residues: Endoribonuclease VapD homolog (95 aa).

Belongs to the VapD ribonuclease family. Homodimer.

In terms of biological role, cleaves ssRNA, mostly between U:A. The protein is Endoribonuclease VapD homolog of Helicobacter pylori (strain ATCC 700392 / 26695) (Campylobacter pylori).